The sequence spans 545 residues: Glucose-6-phosphate isomerase (545 aa).

Glu351 functions as the Proton donor in the catalytic mechanism. Residues His382 and Lys510 contribute to the active site.

The protein belongs to the GPI family.

The protein resides in the cytoplasm. It carries out the reaction alpha-D-glucose 6-phosphate = beta-D-fructose 6-phosphate. It participates in carbohydrate biosynthesis; gluconeogenesis. It functions in the pathway carbohydrate degradation; glycolysis; D-glyceraldehyde 3-phosphate and glycerone phosphate from D-glucose: step 2/4. Its function is as follows. Catalyzes the reversible isomerization of glucose-6-phosphate to fructose-6-phosphate. This is Glucose-6-phosphate isomerase from Shewanella amazonensis (strain ATCC BAA-1098 / SB2B).